Reading from the N-terminus, the 39-residue chain is Conotoxin Cl14.5 (39 aa).

Positions 1–16 (PVNEAGVERLFRALVG) are excised as a propeptide. P38 is modified (proline amide).

Post-translationally, contains 2 disulfide bonds. In terms of tissue distribution, expressed by the venom duct.

The protein resides in the secreted. This chain is Conotoxin Cl14.5, found in Californiconus californicus (California cone).